We begin with the raw amino-acid sequence, 197 residues long: Peptidyl-tRNA hydrolase (197 aa).

Position 21 (Y21) interacts with tRNA. H26 serves as the catalytic Proton acceptor. TRNA-binding residues include Y72, N74, and N120.

Belongs to the PTH family. In terms of assembly, monomer.

The protein localises to the cytoplasm. The catalysed reaction is an N-acyl-L-alpha-aminoacyl-tRNA + H2O = an N-acyl-L-amino acid + a tRNA + H(+). In terms of biological role, hydrolyzes ribosome-free peptidyl-tRNAs (with 1 or more amino acids incorporated), which drop off the ribosome during protein synthesis, or as a result of ribosome stalling. Catalyzes the release of premature peptidyl moieties from peptidyl-tRNA molecules trapped in stalled 50S ribosomal subunits, and thus maintains levels of free tRNAs and 50S ribosomes. The protein is Peptidyl-tRNA hydrolase of Saccharophagus degradans (strain 2-40 / ATCC 43961 / DSM 17024).